The primary structure comprises 416 residues: Lysosome-associated membrane glycoprotein 3 (416 aa).

The signal sequence occupies residues 1–27; it reads MPRQLSAAAALFASLAVILHDGSQMRA. At 28 to 381 the chain is on the lumenal side; it reads KAFPETRDYS…NVDECSSDYT (354 aa). N-linked (GlcNAc...) asparagine glycans are attached at residues asparagine 112, asparagine 158, asparagine 164, asparagine 200, asparagine 232, asparagine 266, and asparagine 291. Disordered stretches follow at residues 136 to 167 and 179 to 219; these read PTIT…NQTT and STTG…LAPQ. Positions 143 to 160 are enriched in low complexity; that stretch reads HTTGTSSSTVSHTTGNTT. Positions 188 to 208 are enriched in low complexity; that stretch reads PTHAPGTTAAAHNTTRTAAPA. A disulfide bridge connects residues cysteine 237 and cysteine 274. Cysteines 339 and 376 form a disulfide. Residues 382 to 402 form a helical membrane-spanning segment; that stretch reads IVLPVIGAIVVGLCLMGMGVY. Residues 403-416 lie on the Cytoplasmic side of the membrane; it reads KIRLRCQSSGYQRI.

Belongs to the LAMP family. Monomer. Interacts with FURIN. As to quaternary structure, (Microbial infection) Interacts with mumps virus protein F; this interaction promotes protein F cleavage by FURIN. In terms of tissue distribution, detected in tonsil interdigitating dendritic cells, in spleen, lymph node, Peyer's patches in the small instestine, in thymus medulla and in B-cells (at protein level). Expressed in lymphoid organs and dendritic cells. Expressed in lung. Up-regulated in carcinomas of the esophagus, colon, rectum, ureter, stomach, breast, fallopian tube, thyroid and parotid tissues.

Its subcellular location is the cell surface. The protein localises to the lysosome membrane. It localises to the cytoplasmic vesicle membrane. It is found in the early endosome membrane. In terms of biological role, lysosomal membrane glycoprotein which plays a role in the unfolded protein response (UPR) that contributes to protein degradation and cell survival during proteasomal dysfunction. Plays a role in the process of fusion of the lysosome with the autophagosome, thereby modulating the autophagic process. Promotes hepatocellular lipogenesis through activation of the PI3K/Akt pathway. May also play a role in dendritic cell function and in adaptive immunity. (Microbial infection) Plays a positive role in post-entry steps of influenza A virus replication, either virus uncoating, cytosolic transport, or nuclear import of viral components, and promotes nuclear accumulation of influenza nucleoprotein/NP at early stages of viral infection. Functionally, (Microbial infection) Supports the FURIN-mediated cleavage of mumps virus fusion protein F by interacting with both FURIN and the unprocessed form but not the processed form of the viral protein F. Its function is as follows. (Microbial infection) Promotes the intracellular proliferation of Salmonella typhimuium. This Homo sapiens (Human) protein is Lysosome-associated membrane glycoprotein 3 (LAMP3).